Reading from the N-terminus, the 243-residue chain is Probable transcriptional regulator ycf27 (243 aa).

The 114-residue stretch at 7–120 (KILVVDDEAS…ELEARIRSVL (114 aa)) folds into the Response regulatory domain. Residue D56 is modified to 4-aspartylphosphate. Residues 76–94 (DVPIIMLTALGEVCDRITG) constitute a DNA-binding region (H-T-H motif). A DNA-binding region (ompR/PhoB-type) is located at residues 135–236 (SGIISIGFLK…ARGTGYLFQR (102 aa)).

The protein resides in the plastid. It localises to the chloroplast. In terms of biological role, probable promoter-specific protein mediating the interaction between DNA and RNA polymerase. In Pyropia yezoensis (Susabi-nori), this protein is Probable transcriptional regulator ycf27 (ycf27).